The primary structure comprises 320 residues: UV DNA damage endonuclease (320 aa).

The protein belongs to the uve1/UvsE family.

Its function is as follows. Component in a DNA repair pathway. Removal of UV LIGHT damaged nucleotides. Recognizes pyrimidine dimers and cleave a phosphodiester bond immediately 5' to the lesion. The chain is UV DNA damage endonuclease from Bacillus velezensis (strain DSM 23117 / BGSC 10A6 / LMG 26770 / FZB42) (Bacillus amyloliquefaciens subsp. plantarum).